A 115-amino-acid polypeptide reads, in one-letter code: T cell receptor beta variable 16 (115 aa).

Positions Met-1–Gly-20 are cleaved as a signal peptide. One can recognise an Ig-like domain in the interval Glu-21–Gln-115. The cysteines at positions 42 and 111 are disulfide-linked.

As to quaternary structure, alpha-beta TR is a heterodimer composed of an alpha and beta chain; disulfide-linked. The alpha-beta TR is associated with the transmembrane signaling CD3 coreceptor proteins to form the TR-CD3 (TcR or TCR). The assembly of alpha-beta TR heterodimers with CD3 occurs in the endoplasmic reticulum where a single alpha-beta TR heterodimer associates with one CD3D-CD3E heterodimer, one CD3G-CD3E heterodimer and one CD247 homodimer forming a stable octameric structure. CD3D-CD3E and CD3G-CD3E heterodimers preferentially associate with TR alpha and TR beta chains, respectively. The association of the CD247 homodimer is the last step of TcR assembly in the endoplasmic reticulum and is required for transport to the cell surface.

It is found in the cell membrane. Functionally, v region of the variable domain of T cell receptor (TR) beta chain that participates in the antigen recognition. Alpha-beta T cell receptors are antigen specific receptors which are essential to the immune response and are present on the cell surface of T lymphocytes. Recognize peptide-major histocompatibility (MH) (pMH) complexes that are displayed by antigen presenting cells (APC), a prerequisite for efficient T cell adaptive immunity against pathogens. Binding of alpha-beta TR to pMH complex initiates TR-CD3 clustering on the cell surface and intracellular activation of LCK that phosphorylates the ITAM motifs of CD3G, CD3D, CD3E and CD247 enabling the recruitment of ZAP70. In turn ZAP70 phosphorylates LAT, which recruits numerous signaling molecules to form the LAT signalosome. The LAT signalosome propagates signal branching to three major signaling pathways, the calcium, the mitogen-activated protein kinase (MAPK) kinase and the nuclear factor NF-kappa-B (NF-kB) pathways, leading to the mobilization of transcription factors that are critical for gene expression and essential for T cell growth and differentiation. The T cell repertoire is generated in the thymus, by V-(D)-J rearrangement. This repertoire is then shaped by intrathymic selection events to generate a peripheral T cell pool of self-MH restricted, non-autoaggressive T cells. Post-thymic interaction of alpha-beta TR with the pMH complexes shapes TR structural and functional avidity. In Homo sapiens (Human), this protein is T cell receptor beta variable 16.